The sequence spans 293 residues: Pyridoxal 5'-phosphate synthase subunit PdxS (293 aa).

D23 is a binding site for D-ribose 5-phosphate. Residue K80 is the Schiff-base intermediate with D-ribose 5-phosphate of the active site. G152 contributes to the D-ribose 5-phosphate binding site. Position 164 (R164) interacts with D-glyceraldehyde 3-phosphate. D-ribose 5-phosphate contacts are provided by residues G213 and 234 to 235 (GS).

Belongs to the PdxS/SNZ family. In the presence of PdxT, forms a dodecamer of heterodimers.

It carries out the reaction aldehydo-D-ribose 5-phosphate + D-glyceraldehyde 3-phosphate + L-glutamine = pyridoxal 5'-phosphate + L-glutamate + phosphate + 3 H2O + H(+). The protein operates within cofactor biosynthesis; pyridoxal 5'-phosphate biosynthesis. In terms of biological role, catalyzes the formation of pyridoxal 5'-phosphate from ribose 5-phosphate (RBP), glyceraldehyde 3-phosphate (G3P) and ammonia. The ammonia is provided by the PdxT subunit. Can also use ribulose 5-phosphate and dihydroxyacetone phosphate as substrates, resulting from enzyme-catalyzed isomerization of RBP and G3P, respectively. This Methanothermobacter thermautotrophicus (strain ATCC 29096 / DSM 1053 / JCM 10044 / NBRC 100330 / Delta H) (Methanobacterium thermoautotrophicum) protein is Pyridoxal 5'-phosphate synthase subunit PdxS.